The following is a 379-amino-acid chain: Lipid-A-disaccharide synthase (379 aa).

Belongs to the LpxB family.

It catalyses the reaction a lipid X + a UDP-2-N,3-O-bis[(3R)-3-hydroxyacyl]-alpha-D-glucosamine = a lipid A disaccharide + UDP + H(+). The protein operates within bacterial outer membrane biogenesis; LPS lipid A biosynthesis. In terms of biological role, condensation of UDP-2,3-diacylglucosamine and 2,3-diacylglucosamine-1-phosphate to form lipid A disaccharide, a precursor of lipid A, a phosphorylated glycolipid that anchors the lipopolysaccharide to the outer membrane of the cell. The sequence is that of Lipid-A-disaccharide synthase from Vibrio parahaemolyticus serotype O3:K6 (strain RIMD 2210633).